Here is a 207-residue protein sequence, read N- to C-terminus: ATP synthase subunit b (207 aa).

The first 27 residues, 1–27 (MKLRATFVFKTTLVALSFALFALFLVS), serve as a signal peptide directing secretion. C28 is lipidated: N-palmitoyl cysteine. C28 carries the S-diacylglycerol cysteine lipid modification. The helical transmembrane segment at 49-69 (WVFLAHLLAFVILLFLLLFLF) threads the bilayer.

Belongs to the ATPase B chain family. In terms of assembly, F-type ATPases have 2 components, F(1) - the catalytic core - and F(0) - the membrane proton channel. F(1) has five subunits: alpha(3), beta(3), gamma(1), delta(1), epsilon(1). F(0) has three main subunits: a(1), b(2) and c(10-14). The alpha and beta chains form an alternating ring which encloses part of the gamma chain. F(1) is attached to F(0) by a central stalk formed by the gamma and epsilon chains, while a peripheral stalk is formed by the delta and b chains.

It is found in the cell membrane. Its function is as follows. F(1)F(0) ATP synthase produces ATP from ADP in the presence of a proton or sodium gradient. F-type ATPases consist of two structural domains, F(1) containing the extramembraneous catalytic core and F(0) containing the membrane proton channel, linked together by a central stalk and a peripheral stalk. During catalysis, ATP synthesis in the catalytic domain of F(1) is coupled via a rotary mechanism of the central stalk subunits to proton translocation. Functionally, component of the F(0) channel, it forms part of the peripheral stalk, linking F(1) to F(0). This Mycoplasma pneumoniae (strain ATCC 29342 / M129 / Subtype 1) (Mycoplasmoides pneumoniae) protein is ATP synthase subunit b.